A 565-amino-acid polypeptide reads, in one-letter code: Mannosyl-oligosaccharide 1,2-alpha-mannosidase (565 aa).

A disulfide bond links Cys320 and Cys363. Glu378 (proton donor) is an active-site residue. Residue Thr501 coordinates Ca(2+). Composition is skewed to basic and acidic residues over residues 526-538 (NEKAQMRESKVID) and 550-565 (KSADQEAKEIIEEIAG). Residues 526-565 (NEKAQMRESKVIDKSNLPEAQPVDKSADQEAKEIIEEIAG) form a disordered region.

This sequence belongs to the glycosyl hydrolase 47 family. The cofactor is Ca(2+).

It catalyses the reaction N(4)-(alpha-D-Man-(1-&gt;2)-alpha-D-Man-(1-&gt;2)-alpha-D-Man-(1-&gt;3)-[alpha-D-Man-(1-&gt;2)-alpha-D-Man-(1-&gt;3)-[alpha-D-Man-(1-&gt;2)-alpha-D-Man-(1-&gt;6)]-alpha-D-Man-(1-&gt;6)]-beta-D-Man-(1-&gt;4)-beta-D-GlcNAc-(1-&gt;4)-beta-D-GlcNAc)-L-asparaginyl-[protein] (N-glucan mannose isomer 9A1,2,3B1,2,3) + 4 H2O = N(4)-(alpha-D-Man-(1-&gt;3)-[alpha-D-Man-(1-&gt;3)-[alpha-D-Man-(1-&gt;6)]-alpha-D-Man-(1-&gt;6)]-beta-D-Man-(1-&gt;4)-beta-D-GlcNAc-(1-&gt;4)-beta-D-GlcNAc)-L-asparaginyl-[protein] (N-glucan mannose isomer 5A1,2) + 4 beta-D-mannose. The catalysed reaction is N(4)-(alpha-D-Man-(1-&gt;2)-alpha-D-Man-(1-&gt;2)-alpha-D-Man-(1-&gt;3)-[alpha-D-Man-(1-&gt;3)-[alpha-D-Man-(1-&gt;2)-alpha-D-Man-(1-&gt;6)]-alpha-D-Man-(1-&gt;6)]-beta-D-Man-(1-&gt;4)-beta-D-GlcNAc-(1-&gt;4)-beta-D-GlcNAc)-L-asparaginyl-[protein] (N-glucan mannose isomer 8A1,2,3B1,3) + 3 H2O = N(4)-(alpha-D-Man-(1-&gt;3)-[alpha-D-Man-(1-&gt;3)-[alpha-D-Man-(1-&gt;6)]-alpha-D-Man-(1-&gt;6)]-beta-D-Man-(1-&gt;4)-beta-D-GlcNAc-(1-&gt;4)-beta-D-GlcNAc)-L-asparaginyl-[protein] (N-glucan mannose isomer 5A1,2) + 3 beta-D-mannose. It participates in protein modification; protein glycosylation. Its function is as follows. Involved in the maturation of Asn-linked oligosaccharides. Trim a single alpha-1,2-linked mannose residue from Man(9)GlcNAc(2) to produce Man(8)GlcNAc(2). The polypeptide is Mannosyl-oligosaccharide 1,2-alpha-mannosidase (MNS1) (Candida albicans (Yeast)).